Here is a 25-residue protein sequence, read N- to C-terminus: LSCKRGTCHFGRCPSHLIKGSCSGG.

It is found in the secreted. Its function is as follows. Bactericidal activity; inhibits Staphylococcus aureus. This chain is Antimicrobial peptide THP3, found in Meleagris gallopavo (Wild turkey).